The following is a 92-amino-acid chain: RNA-binding protein Hfq (92 aa).

A Sm domain is found at 9-68 (DPFLNALRRERVPVSIYLVNGIKLQGQVESFDQFVILLKNTVSQMVYKHAISTVVPSRPF). Polar residues predominate over residues 73 to 82 (HQATNAQAGY). Positions 73–92 (HQATNAQAGYNAQHDDGDEK) are disordered.

Belongs to the Hfq family. Homohexamer.

Its function is as follows. RNA chaperone that binds small regulatory RNA (sRNAs) and mRNAs to facilitate mRNA translational regulation in response to envelope stress, environmental stress and changes in metabolite concentrations. Also binds with high specificity to tRNAs. The sequence is that of RNA-binding protein Hfq from Shewanella pealeana (strain ATCC 700345 / ANG-SQ1).